The chain runs to 102 residues: Putative pterin-4-alpha-carbinolamine dehydratase (102 aa).

The protein belongs to the pterin-4-alpha-carbinolamine dehydratase family.

The enzyme catalyses (4aS,6R)-4a-hydroxy-L-erythro-5,6,7,8-tetrahydrobiopterin = (6R)-L-erythro-6,7-dihydrobiopterin + H2O. The chain is Putative pterin-4-alpha-carbinolamine dehydratase from Burkholderia lata (strain ATCC 17760 / DSM 23089 / LMG 22485 / NCIMB 9086 / R18194 / 383).